The chain runs to 297 residues: Internalin C (297 aa).

The first 34 residues, 1 to 34 (MLKKNNWLQNAVIAMLVLIVGLCINMGSGTKVQA), serve as a signal peptide directing secretion. LRR repeat units lie at residues 74–96 (LSGV…MQFF), 97–120 (TNLK…DLTK), 122–139 (EELS…GIPS), 140–161 (ACLS…LIHL), 162–184 (KNLE…GFLS), and 186–207 (LEVL…RLKK).

It belongs to the internalin family. As to quaternary structure, interacts in vitro with human intestinal mucin-2 (MUC2) but not with mucin-1; binding is slightly better at pH 5.5, (the pH of the intestine) than at pH 7.4. Interacts with the SH3 6 domain of human DNMBP (Tuba). Interacts with I-kappa-B kinase alpha (IKKA, CHUK).

The protein localises to the secreted. It localises to the host cytoplasm. A virulence enhancer that has at least 2 dissociable functions in infection; it impairs translocation of host transcription factor NF-kappa-B to the nucleus and antagonizes the function of the Tuba dynamin-binding protein, promoting bacterial spreading. Perturbs the morphology of host cell junctions by impairing host DNMBP (Tuba) and WASL interaction, altering cortical tension at the cell junctions and allowing bacteria to more efficiently form bacteria-filled cell protrusions which promote bacterial spreading within infected host tissue. Down-regulates the host inflammation response usually induced by Listeria infection. Interacts with host I-kappa-B kinase alpha (IKKA, CHUK), which prevents IKKA from phosphorylating NF-kappa-B inhibitor alpha (IKBA, NFKBIA) and thus delays degradation of phospho-IKBA. Translocation of host transcription factor p65 (a subunit of NF-kappa-B, RELA) into the nucleus is impaired, which prevents activation of NF-KB-regulated genes. Recognized by serum from healthy humans exposed to L.monocytogenes as well from patients who have recovered from listeriosis. The chain is Internalin C from Listeria monocytogenes serotype 1/2a (strain EGD / Mackaness).